We begin with the raw amino-acid sequence, 823 residues long: Ciliated left-right organizer ZP-N domains-containing protein (823 aa).

A signal peptide spans 1–22 (MWGSPALAWAVWLACVQPTVFP). Disordered stretches follow at residues 206–242 (MGLYVDMNATTVTVQSPRQGLLQRWEVLNTSAELLPL), 269–422 (LVHI…DLLH), 434–520 (GPFL…SPSP), and 632–656 (LPREGARGHMDLSSSEPSQDIEGPG). A compositionally biased stretch (pro residues) spans 216–230 (TVTVQSPRQGLLQRW). Residues 389 to 402 (GPETPPAGVPPAAS) are compositionally biased toward low complexity.

It localises to the secreted. Plays a role in left-right patterning process. This is Ciliated left-right organizer ZP-N domains-containing protein from Homo sapiens (Human).